The sequence spans 83 residues: Hainantoxin-III 5 (83 aa).

Positions 1–21 (MKASRFLALAGLVLLFVVGYA) are cleaved as a signal peptide. The propeptide occupies 22-48 (SESEEKEFPRELLSKIFAVDDFKGEER). Intrachain disulfides connect C50/C65, C57/C70, and C64/C77. L81 is modified (leucine amide).

Belongs to the neurotoxin 10 (Hwtx-1) family. 15 (Hntx-3) subfamily. In terms of assembly, monomer. Expressed by the venom gland.

The protein localises to the secreted. Selective antagonist of neuronal tetrodotoxin (TTX)-sensitive voltage-gated sodium channels (IC(50)=1270 nM on Nav1.1/SCN1A, 270 nM on Nav1.2/SCN2A, 491 nM on Nav1.3/SCN3A and 232 nM on Nav1.7/SCN9A). This toxin suppress Nav1.7 current amplitude without significantly altering the activation, inactivation, and repriming kinetics. Short extreme depolarizations partially activate the toxin-bound channel, indicating voltage-dependent inhibition of this toxin. This toxin increases the deactivation of the Nav1.7 current after extreme depolarizations. The toxin-Nav1.7 complex is gradually dissociated upon prolonged strong depolarizations in a voltage-dependent manner, and the unbound toxin rebinds to Nav1.7 after a long repolarization. Moreover, analysis of chimeric channels showed that the DIIS3-S4 linker is critical for toxin binding to Nav1.7. These data are consistent with this toxin interacting with Nav1.7 site 4 and trapping the domain II voltage sensor in the closed state. In Cyriopagopus hainanus (Chinese bird spider), this protein is Hainantoxin-III 5.